The chain runs to 437 residues: GTPase Der (437 aa).

EngA-type G domains lie at 3–167 and 176–352; these read NIVA…TKKV and PAIA…DIRQ. Residues 9 to 16, 56 to 60, 119 to 122, 182 to 189, 229 to 233, and 294 to 297 contribute to the GTP site; these read GRPNVGKS, DTGGW, NKAD, GKPNVGKS, DTAGI, and NKWD. Positions 353–437 constitute a KH-like domain; it reads IKIPTSQLNR…TPINIFMREK (85 aa).

It belongs to the TRAFAC class TrmE-Era-EngA-EngB-Septin-like GTPase superfamily. EngA (Der) GTPase family. As to quaternary structure, associates with the 50S ribosomal subunit.

GTPase that plays an essential role in the late steps of ribosome biogenesis. This chain is GTPase Der, found in Azobacteroides pseudotrichonymphae genomovar. CFP2.